The sequence spans 542 residues: CTP synthase (542 aa).

The segment at Met-1–Leu-265 is amidoligase domain. Ser-13 is a binding site for CTP. Ser-13 contributes to the UTP binding site. ATP contacts are provided by residues Ser-14–Ile-19 and Asp-71. Positions 71 and 139 each coordinate Mg(2+). CTP is bound by residues Asp-146–Glu-148, Lys-186–Gln-191, and Lys-222. UTP-binding positions include Lys-186 to Gln-191 and Lys-222. Residues Thr-290–Lys-541 form the Glutamine amidotransferase type-1 domain. Residue Gly-351 coordinates L-glutamine. Catalysis depends on Cys-378, which acts as the Nucleophile; for glutamine hydrolysis. Residues Leu-379–Gln-382, Glu-402, and Arg-469 each bind L-glutamine. Catalysis depends on residues His-514 and Glu-516.

It belongs to the CTP synthase family. Homotetramer.

It catalyses the reaction UTP + L-glutamine + ATP + H2O = CTP + L-glutamate + ADP + phosphate + 2 H(+). The enzyme catalyses L-glutamine + H2O = L-glutamate + NH4(+). The catalysed reaction is UTP + NH4(+) + ATP = CTP + ADP + phosphate + 2 H(+). Its pathway is pyrimidine metabolism; CTP biosynthesis via de novo pathway; CTP from UDP: step 2/2. With respect to regulation, allosterically activated by GTP, when glutamine is the substrate; GTP has no effect on the reaction when ammonia is the substrate. The allosteric effector GTP functions by stabilizing the protein conformation that binds the tetrahedral intermediate(s) formed during glutamine hydrolysis. Inhibited by the product CTP, via allosteric rather than competitive inhibition. Functionally, catalyzes the ATP-dependent amination of UTP to CTP with either L-glutamine or ammonia as the source of nitrogen. Regulates intracellular CTP levels through interactions with the four ribonucleotide triphosphates. This chain is CTP synthase, found in Pseudomonas putida (strain W619).